We begin with the raw amino-acid sequence, 446 residues long: Phosphoglucosamine mutase (446 aa).

Serine 100 (phosphoserine intermediate) is an active-site residue. Positions 100, 241, 243, and 245 each coordinate Mg(2+). Position 100 is a phosphoserine (serine 100).

This sequence belongs to the phosphohexose mutase family. The cofactor is Mg(2+). In terms of processing, activated by phosphorylation.

It catalyses the reaction alpha-D-glucosamine 1-phosphate = D-glucosamine 6-phosphate. Functionally, catalyzes the conversion of glucosamine-6-phosphate to glucosamine-1-phosphate. This Methylobacterium sp. (strain 4-46) protein is Phosphoglucosamine mutase.